The primary structure comprises 920 residues: Chitin synthase C (920 aa).

Disordered regions lie at residues 1 to 41 (MSYN…NAYQ) and 140 to 173 (IPML…SPAP). Residues 154–163 (YSDEYQVEEQ) are compositionally biased toward acidic residues. Helical transmembrane passes span 466 to 486 (SAFG…FVAL), 564 to 584 (RWLN…YQIW), 608 to 628 (LFAW…TTYL), 640 to 660 (VLGV…FVLA), and 675 to 695 (MVYF…FVTV). N-linked (GlcNAc...) asparagine glycosylation is present at N715. The next 4 helical transmembrane spans lie at 718–738 (FFTI…ASII), 749–769 (FIQY…YAFC), 847–867 (AVVL…LSAA), and 892–912 (VVLW…LWYL).

Belongs to the chitin synthase family. Class I subfamily.

The protein resides in the cell membrane. The catalysed reaction is [(1-&gt;4)-N-acetyl-beta-D-glucosaminyl](n) + UDP-N-acetyl-alpha-D-glucosamine = [(1-&gt;4)-N-acetyl-beta-D-glucosaminyl](n+1) + UDP + H(+). In terms of biological role, polymerizes chitin, a structural polymer of the cell wall and septum, by transferring the sugar moiety of UDP-GlcNAc to the non-reducing end of the growing chitin polymer. Involved in hyphal growth. The polypeptide is Chitin synthase C (Aspergillus oryzae (strain ATCC 42149 / RIB 40) (Yellow koji mold)).